Consider the following 238-residue polypeptide: Ribonuclease PH (238 aa).

Phosphate is bound by residues Arg-86 and 124–126; that span reads GTR.

The protein belongs to the RNase PH family. As to quaternary structure, homohexameric ring arranged as a trimer of dimers.

It catalyses the reaction tRNA(n+1) + phosphate = tRNA(n) + a ribonucleoside 5'-diphosphate. Functionally, phosphorolytic 3'-5' exoribonuclease that plays an important role in tRNA 3'-end maturation. Removes nucleotide residues following the 3'-CCA terminus of tRNAs; can also add nucleotides to the ends of RNA molecules by using nucleoside diphosphates as substrates, but this may not be physiologically important. Probably plays a role in initiation of 16S rRNA degradation (leading to ribosome degradation) during starvation. This is Ribonuclease PH from Aliivibrio fischeri (strain ATCC 700601 / ES114) (Vibrio fischeri).